The chain runs to 689 residues: Glycine--tRNA ligase beta subunit (689 aa).

The protein belongs to the class-II aminoacyl-tRNA synthetase family. As to quaternary structure, tetramer of two alpha and two beta subunits.

It is found in the cytoplasm. The enzyme catalyses tRNA(Gly) + glycine + ATP = glycyl-tRNA(Gly) + AMP + diphosphate. The sequence is that of Glycine--tRNA ligase beta subunit from Aeromonas hydrophila subsp. hydrophila (strain ATCC 7966 / DSM 30187 / BCRC 13018 / CCUG 14551 / JCM 1027 / KCTC 2358 / NCIMB 9240 / NCTC 8049).